The chain runs to 25 residues: Flagellar filament outer layer protein (25 aa).

In terms of assembly, the flagellum consists of an outer layer composed of repeating units of FlaA around a core that contains several antigenically related polypeptides.

It localises to the periplasmic flagellum. The protein resides in the periplasm. In terms of biological role, component of the outer layer of the flagella. The polypeptide is Flagellar filament outer layer protein (flaA) (Treponema phagedenis).